We begin with the raw amino-acid sequence, 335 residues long: MTEIATTSGISSVGLLSVGAYRPTRVVTNDEICENIDSSDEWIYSRTGIKTRRFAAPEESAASMAIEASREAIAKAALTGSDIDGVIVATSTHFLQTPACAPIVAAALGCQNVPAFDISAGCSGFGHALGIAADMIRGGSAATILVIGTEKLSPTVDMTDRSNCFIFVDGAASVLVGHSPIQGIGPTVWGSDGEQAAAIRQDIDWISHAENPAGPRPFLRMEGTAVFRWAAFEMGKVGQQAMDAAGVKPDEIDVFIPHQANSRINELLTKNLQLRPDAVIANDIEHTGNTSAASIPLAMAELLATGAAKPGDLALLIGYGAGLSYAAQVVRMPNS.

Catalysis depends on residues Cys122 and His258. An ACP-binding region spans residues 259-263 (QANSR). Asn289 is a catalytic residue.

It belongs to the thiolase-like superfamily. FabH family. In terms of assembly, homodimer.

Its subcellular location is the cytoplasm. It carries out the reaction malonyl-[ACP] + dodecanoyl-CoA + H(+) = 3-oxotetradecanoyl-[ACP] + CO2 + CoA. It participates in lipid metabolism; fatty acid biosynthesis. The protein operates within lipid metabolism; mycolic acid biosynthesis. Catalyzes the condensation reaction of fatty acid synthesis by the addition to an acyl acceptor of two carbons from malonyl-ACP. Catalyzes the first condensation reaction which initiates fatty acid synthesis and may therefore play a role in governing the total rate of fatty acid production. Possesses both acetoacetyl-ACP synthase and acetyl transacylase activities. Its substrate specificity determines the biosynthesis of branched-chain and/or straight-chain of fatty acids. This Mycobacterium ulcerans (strain Agy99) protein is Mycobacterial beta-ketoacyl-[acyl-carrier-protein] synthase III.